The following is a 262-amino-acid chain: 14-3-3-like protein B (262 aa).

This sequence belongs to the 14-3-3 family.

The protein is 14-3-3-like protein B of Hordeum vulgare (Barley).